A 281-amino-acid polypeptide reads, in one-letter code: Shikimate dehydrogenase (NADP(+)) (281 aa).

Shikimate-binding positions include serine 15 to serine 17 and threonine 62. Lysine 66 serves as the catalytic Proton acceptor. Asparagine 87 and aspartate 102 together coordinate shikimate. Residues glycine 127–serine 131, asparagine 151–arginine 156, and leucine 217 contribute to the NADP(+) site. Tyrosine 219 provides a ligand contact to shikimate. Position 241 (glycine 241) interacts with NADP(+).

Belongs to the shikimate dehydrogenase family. Homodimer.

It carries out the reaction shikimate + NADP(+) = 3-dehydroshikimate + NADPH + H(+). The protein operates within metabolic intermediate biosynthesis; chorismate biosynthesis; chorismate from D-erythrose 4-phosphate and phosphoenolpyruvate: step 4/7. In terms of biological role, involved in the biosynthesis of the chorismate, which leads to the biosynthesis of aromatic amino acids. Catalyzes the reversible NADPH linked reduction of 3-dehydroshikimate (DHSA) to yield shikimate (SA). This is Shikimate dehydrogenase (NADP(+)) from Stenotrophomonas maltophilia (strain R551-3).